A 228-amino-acid polypeptide reads, in one-letter code: Derlin-3 (228 aa).

At 1 to 22 (MAGQRLAAGFLQVPAVTRAYTA) the chain is on the cytoplasmic side. A helical membrane pass occupies residues 23–43 (ACVLTTAAVQLELLSPFQLYF). Residues 44–57 (NPHLVFRKFQVWRL) are Lumenal-facing. A helical membrane pass occupies residues 58–78 (ITTFLFFGPLGFGFFFNMLFV). The Cytoplasmic portion of the chain corresponds to 79–98 (FRYCRMLEEGSFRGRKADFV). The chain crosses the membrane as a helical span at residues 99 to 119 (FMFLFGGVLMTLLGFLGSLFF). Residues 120 to 168 (LGQALMAMLVYVWSRRSPHVRVNFFGLLNFQAPFLPWALMGFSLLLGNS) lie on the Lumenal side of the membrane. The helical transmembrane segment at 169 to 189 (VVTDLLGILVGHIYYFLEDVF) threads the bilayer. Residues 190-228 (PNQPGGKRLLLTPSVLKLLLDDPQEDPDYLPLPEEQPEL) lie on the Cytoplasmic side of the membrane.

Belongs to the derlin family. In terms of assembly, forms homo- and heterooligomers with DERL2 and, to a lesser extent, with DERL1. Interacts with VCP and EDEM1. Interacts with SELENOK and SELENOS. Interacts with the signal recognition particle/SRP and the SRP receptor; in the process of endoplasmic reticulum stress-induced pre-emptive quality control. In terms of tissue distribution, highly expressed in spleen, lung, liver, spleen and testis. Expressed at intermediate level in kidney. Weakly or not expressed in brain, heart and skeletal muscle.

Its subcellular location is the endoplasmic reticulum membrane. Its function is as follows. Functional component of endoplasmic reticulum-associated degradation (ERAD) for misfolded lumenal glycoproteins, but not that of misfolded nonglycoproteins. May act by forming a channel that allows the retrotranslocation of misfolded glycoproteins into the cytosol where they are ubiquitinated and degraded by the proteasome. May mediate the interaction between VCP and the misfolded glycoproteins. May be involved in endoplasmic reticulum stress-induced pre-emptive quality control, a mechanism that selectively attenuates the translocation of newly synthesized proteins into the endoplasmic reticulum and reroutes them to the cytosol for proteasomal degradation. This Mus musculus (Mouse) protein is Derlin-3.